A 37-amino-acid polypeptide reads, in one-letter code: M-oxotoxin-Ot2a (37 aa).

Expressed by the venom gland.

The protein resides in the secreted. Functionally, disrupts biological membranes, particularly those rich in phosphocholine. Has antimicrobial activity against Gram-negative bacterium E.coli, Gram-positive bacteria B.subtilis and S.aureus, and hemolytic activity against sheep, pig and guinea pig red blood cells. Has insecticidal activity against S.frugiperda ovarian cells by opening non-selective ion channels. Enhances the insecticidal activity of spider venom neurotoxic peptides. In Oxyopes takobius (Lynx spider), this protein is M-oxotoxin-Ot2a.